A 119-amino-acid polypeptide reads, in one-letter code: Large ribosomal subunit protein uL22c (119 aa).

This sequence belongs to the universal ribosomal protein uL22 family. Part of the 50S ribosomal subunit.

It is found in the plastid. It localises to the chloroplast. Its function is as follows. This protein binds specifically to 23S rRNA. Functionally, the globular domain of the protein is located near the polypeptide exit tunnel on the outside of the subunit, while an extended beta-hairpin is found that lines the wall of the exit tunnel in the center of the 70S ribosome. This Marchantia polymorpha (Common liverwort) protein is Large ribosomal subunit protein uL22c (rpl22).